The chain runs to 396 residues: NADH-quinone oxidoreductase subunit D (396 aa).

The protein belongs to the complex I 49 kDa subunit family. NDH-1 is composed of 14 different subunits. Subunits NuoB, C, D, E, F, and G constitute the peripheral sector of the complex.

It localises to the cell inner membrane. It catalyses the reaction a quinone + NADH + 5 H(+)(in) = a quinol + NAD(+) + 4 H(+)(out). Its function is as follows. NDH-1 shuttles electrons from NADH, via FMN and iron-sulfur (Fe-S) centers, to quinones in the respiratory chain. The immediate electron acceptor for the enzyme in this species is believed to be ubiquinone. Couples the redox reaction to proton translocation (for every two electrons transferred, four hydrogen ions are translocated across the cytoplasmic membrane), and thus conserves the redox energy in a proton gradient. In Chelativorans sp. (strain BNC1), this protein is NADH-quinone oxidoreductase subunit D.